The following is a 757-amino-acid chain: MGQKRQRDQKGPGSFAKKRKKSAKPSDATAEDSDWDGIVGMNELNWKEVALPDRLEDAGGFFGLEEIEGVDIIRSEGNGEIKFKKKEPEETNTQSDDEWEGFGDDDQAVSQEESKETQDEPNESDKKAKVKESKNAKKEKKKNAKDARKEQKEKAVESKEDKGIKSGLSFAALQEEEDDGADVSAWESLGLSPEILAGISKMKFTTPTSVQKACIPPILDGRDVIGKASTGSGKTLAFGIPILEYYLEKLRSKTQKDSEKTETTPIALVLSPTRELAHQLAKHIGEVVSHAPGVNARIALLTGGLSLQKQQRVLTNADIVIGTPGRVWEVLSSGHGLIRKMQAIKFLVIDEADRLLSEGHFKEAHEILAALDRVVDGEFPDESSDESDDELDPKSGRQTLVFSATFHRDLQQKLAGKGKWTGGDIMSQKESMEYLLQKLNFREEKPRFIDVNPVSQMAENLKEGIVECAAMEKDLFLYTLLLYHPKHRTLVFTNSISAVRRLTQLLQTLQLPALALHSSMAQKARLRSVERFSSPSSDPSSILVATDVAARGLDIKGIDFVVHYHAPRTADAYVHRSGRTARAGASGKSVIICSPDEMVGVVRLAAKVHANMANRKKVPLESLELDRRVVSRVKQRVTLAARIVDSNIAKEKVSSEDNWLRTAAEDLGVDYDSEEFDNAAARGRGRGRGRQERERKAGSTSKGELAGMRAELKQLLSQRVNVGVSERYLTSGRVDIEALLRGEGNNSFLGQVDPLDF.

Basic and acidic residues-rich tracts occupy residues 1–10 and 71–89; these read MGQKRQRDQK and DIIR…KEPE. Disordered stretches follow at residues 1–38 and 66–161; these read MGQK…WDGI and EIEG…SKED. Over residues 95–107 the composition is skewed to acidic residues; that stretch reads SDDEWEGFGDDDQ. Basic and acidic residues-rich tracts occupy residues 112 to 136 and 144 to 161; these read EESK…SKNA and AKDA…SKED. The Q motif signature appears at 184 to 212; that stretch reads SAWESLGLSPEILAGISKMKFTTPTSVQK. One can recognise a Helicase ATP-binding domain in the interval 215 to 424; the sequence is IPPILDGRDV…AGKGKWTGGD (210 aa). 228–235 is an ATP binding site; that stretch reads ASTGSGKT. The short motif at 350-353 is the DEAD box element; it reads DEAD. Positions 460-626 constitute a Helicase C-terminal domain; the sequence is NLKEGIVECA…KVPLESLELD (167 aa). Residues 678-704 are disordered; it reads NAAARGRGRGRGRQERERKAGSTSKGE.

This sequence belongs to the DEAD box helicase family. DDX24/MAK5 subfamily.

The protein resides in the nucleus. It is found in the nucleolus. It carries out the reaction ATP + H2O = ADP + phosphate + H(+). In terms of biological role, ATP-binding RNA helicase involved in the biogenesis of 60S ribosomal subunits and is required for the normal formation of 25S and 5.8S rRNAs. This is ATP-dependent RNA helicase mak5 (mak5) from Aspergillus oryzae (strain ATCC 42149 / RIB 40) (Yellow koji mold).